A 479-amino-acid polypeptide reads, in one-letter code: Cardiolipin synthase A (479 aa).

The next 2 membrane-spanning stretches (helical) occupy residues 8-28 (FFGYLLGLIHLLGIVAALHAV) and 38-58 (IAWAMPLFFIPYLTLIPYLVF). 2 consecutive PLD phosphodiesterase domains span residues 218 to 245 (VNFRNHRKIVVVDGLVGFIGGHNVGDEY) and 392 to 419 (QPGFLHQKVVLVDDDVSAIGSANLDNRS). Catalysis depends on residues His223, Lys225, Asp230, His397, Lys399, and Asp404.

It belongs to the phospholipase D family. Cardiolipin synthase subfamily. ClsA sub-subfamily.

Its subcellular location is the cell inner membrane. The enzyme catalyses 2 a 1,2-diacyl-sn-glycero-3-phospho-(1'-sn-glycerol) = a cardiolipin + glycerol. Catalyzes the reversible phosphatidyl group transfer from one phosphatidylglycerol molecule to another to form cardiolipin (CL) (diphosphatidylglycerol) and glycerol. In Pseudomonas putida (strain GB-1), this protein is Cardiolipin synthase A.